A 327-amino-acid chain; its full sequence is Phenylalanine--tRNA ligase alpha subunit (327 aa).

Residue glutamate 252 participates in Mg(2+) binding.

Belongs to the class-II aminoacyl-tRNA synthetase family. Phe-tRNA synthetase alpha subunit type 1 subfamily. In terms of assembly, tetramer of two alpha and two beta subunits. Mg(2+) serves as cofactor.

The protein resides in the cytoplasm. The catalysed reaction is tRNA(Phe) + L-phenylalanine + ATP = L-phenylalanyl-tRNA(Phe) + AMP + diphosphate + H(+). This Klebsiella pneumoniae subsp. pneumoniae (strain ATCC 700721 / MGH 78578) protein is Phenylalanine--tRNA ligase alpha subunit.